The primary structure comprises 350 residues: Izumo sperm-egg fusion protein 1 (350 aa).

Positions 1-21 (MGPHFTLLCAALAGCLLPAEG) are cleaved as a signal peptide. 5 disulfide bridges follow: Cys-22–Cys-149, Cys-25–Cys-152, Cys-135–Cys-159, Cys-139–Cys-165, and Cys-182–Cys-233. The Extracellular portion of the chain corresponds to 22-292 (CVICDPSVVL…LQPEKMLASR (271 aa)). The interval 148–160 (WCKNCKKEVHACR) is important for interaction with IZUMO1R. The Ig-like C2-type domain occupies 167–251 (ERNVEVPQME…PATIINFHVT (85 aa)). Residue Asn-204 is glycosylated (N-linked (GlcNAc...) asparagine). Residues 293–313 (LLGLLICGSLALITGLTFAIF) form a helical membrane-spanning segment. At 314 to 350 (RRRKVIDFIKSSLFGLGSGAAEQTQVPKEKATDSRQQ) the chain is on the cytoplasmic side. The residue at position 325 (Ser-325) is a Phosphoserine.

Belongs to the Izumo family. Monomer, homodimer; disulfide-linked and homooligomer; depending on the context. Interacts with IZUMO1R/JUNO. IZUMO1 and IZUMO1R/JUNO form a complex with 1:1 stoichiometry. In gamete recognition, IZUMO1R/JUNO first binds to monomeric IZUMO1. The weak, but specific interaction with IZUMO1R/JUNO induces IZUMO1 homodimerization. The process follows a tight binding phase where IZUMO1 bends the entire structure towards the sperm membrane side through a thiol-disulfide exchange reaction. The molecule no longer binds to IZUMO1R/JUNO and instead binds to a putative second oocyte receptor. Interacts with ACE3. Part of a oolemmal binding multimeric complex (IZUMO1 complex) composed at least of IZUMO1 and GLIPR1L1; the complex assemblage is influenced by the maturation status of the male germ cell. Interacts with GLIPR1L1. Interacts with FREY; the interaction retains IZUMO1 at the endoplasmic reticulum membrane and coordinates IZUMO1 complex assembly. Interacts with FCRL3/MAIA (via extracellular domain); the interaction replaces IZUMO1R/JUNO as IZUMO1 receptor after sperm-egg adhesion. Interacts with WDR54. Forms a complex with SPACA6 and TMEM81 on spermatocyte cell membrane. In terms of processing, N-glycosylated. Glycosylation is not essential for fusion and for proper protein trafficking in sperm. Post-translationally, phosphorylated. The cytoplasmic C-terminus is phosphorylated and undergoes phosphorylation changes during epididymal transit. Sperm-specific (at protein level). Detectable on sperm surface only after the acrosome reaction.

Its subcellular location is the cell membrane. It localises to the cytoplasmic vesicle. The protein localises to the secretory vesicle. It is found in the acrosome membrane. In terms of biological role, essential sperm cell-surface protein required for fertilization by acting as a ligand for IZUMO1R/JUNO receptor on egg. The IZUMO1:IZUMO1R/JUNO interaction is a necessary adhesion event between sperm and egg that is required for fertilization but is not sufficient for cell fusion. The ligand-receptor interaction probably does not act as a membrane 'fusogen'. Acts a ligand for the human-specific oolemma epitope FCRL3/MAIA during fertilization. FCRL3/MAIA replaces IZUMO1R/JUNO as IZUMO1 receptor after sperm-egg adhesion, which permits species-specific gamete fusion. Plays a critical role in sperm-oolemma binding prior to plasma membrane fusion. Can mediate cell-cell fusion in cultured mammalian cells independently of its binding to IZUMO1R/JUNO. The protein is Izumo sperm-egg fusion protein 1 of Homo sapiens (Human).